The following is a 391-amino-acid chain: D-gluconate/D-galactonate dehydratase (391 aa).

Position 198 (glutamate 198) interacts with Mg(2+). Residue histidine 200 is the Proton donor of the active site. Mg(2+) contacts are provided by glutamate 224 and glutamate 250. Histidine 300 functions as the Proton acceptor in the catalytic mechanism.

This sequence belongs to the mandelate racemase/muconate lactonizing enzyme family. GaD subfamily. Homooctamer. Requires Mg(2+) as cofactor.

The catalysed reaction is D-gluconate = 2-dehydro-3-deoxy-D-gluconate + H2O. The enzyme catalyses D-galactonate = 2-dehydro-3-deoxy-D-galactonate + H2O. It functions in the pathway carbohydrate acid metabolism; D-gluconate degradation. Functionally, involved in the degradation of glucose and galactose via the nonphosphorylative variant of Entner-Doudoroff pathway. Catalyzes the dehydration of gluconate to produce 2-keto-3-deoxygluconate (KDG). It is also able to catalyze the dehydration of galactonate to produce 2-keto-3-deoxygalactonate (KDGal). This Picrophilus torridus (strain ATCC 700027 / DSM 9790 / JCM 10055 / NBRC 100828 / KAW 2/3) protein is D-gluconate/D-galactonate dehydratase.